The sequence spans 190 residues: Translation initiation factor IF-3 (190 aa).

This sequence belongs to the IF-3 family. In terms of assembly, monomer.

It localises to the cytoplasm. In terms of biological role, IF-3 binds to the 30S ribosomal subunit and shifts the equilibrium between 70S ribosomes and their 50S and 30S subunits in favor of the free subunits, thus enhancing the availability of 30S subunits on which protein synthesis initiation begins. The protein is Translation initiation factor IF-3 of Prochlorococcus marinus subsp. pastoris (strain CCMP1986 / NIES-2087 / MED4).